We begin with the raw amino-acid sequence, 299 residues long: Urease accessory protein UreD (299 aa).

This sequence belongs to the UreD family. As to quaternary structure, ureD, UreF and UreG form a complex that acts as a GTP-hydrolysis-dependent molecular chaperone, activating the urease apoprotein by helping to assemble the nickel containing metallocenter of UreC. The UreE protein probably delivers the nickel.

It is found in the cytoplasm. Its function is as follows. Required for maturation of urease via the functional incorporation of the urease nickel metallocenter. The polypeptide is Urease accessory protein UreD (Natronomonas pharaonis (strain ATCC 35678 / DSM 2160 / CIP 103997 / JCM 8858 / NBRC 14720 / NCIMB 2260 / Gabara) (Halobacterium pharaonis)).